The chain runs to 193 residues: Peptidyl-tRNA hydrolase (193 aa).

Tyrosine 21 provides a ligand contact to tRNA. Histidine 26 serves as the catalytic Proton acceptor. TRNA contacts are provided by tyrosine 72, asparagine 74, and asparagine 120.

It belongs to the PTH family. Monomer.

The protein localises to the cytoplasm. It carries out the reaction an N-acyl-L-alpha-aminoacyl-tRNA + H2O = an N-acyl-L-amino acid + a tRNA + H(+). In terms of biological role, hydrolyzes ribosome-free peptidyl-tRNAs (with 1 or more amino acids incorporated), which drop off the ribosome during protein synthesis, or as a result of ribosome stalling. Catalyzes the release of premature peptidyl moieties from peptidyl-tRNA molecules trapped in stalled 50S ribosomal subunits, and thus maintains levels of free tRNAs and 50S ribosomes. This chain is Peptidyl-tRNA hydrolase, found in Nocardia farcinica (strain IFM 10152).